The primary structure comprises 307 residues: Olfactory receptor 5AC1 (307 aa).

At 1–28 (MAEENKILVTHFVLTGLTDHPGLQAPLF) the chain is on the extracellular side. A helical transmembrane segment spans residues 29–49 (LVFLVIYLITLVGNLGLMALI). The Cytoplasmic segment spans residues 50–56 (WKDPHLH). The helical transmembrane segment at 57 to 77 (TPIYLFLGSLAFADACTSSSV) threads the bilayer. Topologically, residues 78 to 99 (TSKMLINFLSKNHMLSMAKCAT) are extracellular. C97 and C179 are disulfide-bonded. Residues 100–120 (QFYFFGSNATTECFLLVVMAY) traverse the membrane as a helical segment. Topologically, residues 121–143 (DRYVAICNPLLYPVVMSNSLCTQ) are cytoplasmic. Residues 144–164 (FIGISYFIGFLHSAIHVGLLF) form a helical membrane-spanning segment. Over 165–195 (RLTFCRSNIIHYFYCEILQLFKISCTNPTVN) the chain is Extracellular. A helical membrane pass occupies residues 196–216 (ILLIFIFSAFIQVFTFMTLIV). Topologically, residues 217–239 (SYSYILSAILKKKSEKGRSKAFS) are cytoplasmic. A helical transmembrane segment spans residues 240-260 (TCSAHLLSVSLFYGTLFFMYV). Residues 261–271 (SSRSGSAADQA) lie on the Extracellular side of the membrane. The helical transmembrane segment at 272–292 (KMYSLFYTIIIPLLNPFIYSL) threads the bilayer. Residues 293–307 (RNKEVIDALRRIMKK) lie on the Cytoplasmic side of the membrane.

Belongs to the G-protein coupled receptor 1 family.

Its subcellular location is the cell membrane. Odorant receptor. This chain is Olfactory receptor 5AC1 (OR5AC1), found in Homo sapiens (Human).